Here is a 427-residue protein sequence, read N- to C-terminus: Hydroxylamine reductase (427 aa).

Residues Cys-3, Cys-6, Cys-15, and Cys-21 each coordinate [4Fe-4S] cluster. Residues His-129, Glu-153, Cys-197, Cys-283, Cys-311, Cys-336, Glu-370, and Lys-372 each coordinate hybrid [4Fe-2O-2S] cluster. Cys-283 is subject to Cysteine persulfide.

The protein belongs to the HCP family. [4Fe-4S] cluster serves as cofactor. It depends on hybrid [4Fe-2O-2S] cluster as a cofactor.

The protein localises to the cytoplasm. It catalyses the reaction A + NH4(+) + H2O = hydroxylamine + AH2 + H(+). Its function is as follows. Catalyzes the reduction of hydroxylamine to form NH(3) and H(2)O. The protein is Hydroxylamine reductase of Moorella thermoacetica (strain ATCC 39073 / JCM 9320).